Here is a 262-residue protein sequence, read N- to C-terminus: Co-chaperone protein DjlA (262 aa).

Residues 1-6 (MRFWGK) are Periplasmic-facing. The helical transmembrane segment at 7–30 (FFGFVIGFMFGRFFGALLGLWLGH) threads the bilayer. The Cytoplasmic portion of the chain corresponds to 31–262 (LYDKRPGGGA…DRVKSERGMR (232 aa)). The 67-residue stretch at 196–262 (DAYHLLGITA…DRVKSERGMR (67 aa)) folds into the J domain.

Homodimer.

The protein resides in the cell inner membrane. Functionally, regulatory DnaK co-chaperone. Direct interaction between DnaK and DjlA is needed for the induction of the wcaABCDE operon, involved in the synthesis of a colanic acid polysaccharide capsule, possibly through activation of the RcsB/RcsC phosphotransfer signaling pathway. The colanic acid capsule may help the bacterium survive conditions outside the host. The polypeptide is Co-chaperone protein DjlA (Shewanella oneidensis (strain ATCC 700550 / JCM 31522 / CIP 106686 / LMG 19005 / NCIMB 14063 / MR-1)).